Consider the following 351-residue polypeptide: Phosphate acyltransferase (351 aa).

Belongs to the PlsX family. In terms of assembly, homodimer. Probably interacts with PlsY.

It is found in the cytoplasm. It catalyses the reaction a fatty acyl-[ACP] + phosphate = an acyl phosphate + holo-[ACP]. It functions in the pathway lipid metabolism; phospholipid metabolism. In terms of biological role, catalyzes the reversible formation of acyl-phosphate (acyl-PO(4)) from acyl-[acyl-carrier-protein] (acyl-ACP). This enzyme utilizes acyl-ACP as fatty acyl donor, but not acyl-CoA. This Paramagnetospirillum magneticum (strain ATCC 700264 / AMB-1) (Magnetospirillum magneticum) protein is Phosphate acyltransferase.